Here is a 408-residue protein sequence, read N- to C-terminus: Imidazolonepropionase (408 aa).

Fe(3+) contacts are provided by His73 and His75. 2 residues coordinate Zn(2+): His73 and His75. Arg82, Tyr145, and His178 together coordinate 4-imidazolone-5-propanoate. Tyr145 is an N-formimidoyl-L-glutamate binding site. His243 contacts Fe(3+). His243 serves as a coordination point for Zn(2+). 4-imidazolone-5-propanoate is bound at residue Gln246. Fe(3+) is bound at residue Asp318. Zn(2+) is bound at residue Asp318. Residues Asn320 and Gly322 each contribute to the N-formimidoyl-L-glutamate site. Ser323 lines the 4-imidazolone-5-propanoate pocket.

Belongs to the metallo-dependent hydrolases superfamily. HutI family. It depends on Zn(2+) as a cofactor. Requires Fe(3+) as cofactor.

The protein resides in the cytoplasm. It carries out the reaction 4-imidazolone-5-propanoate + H2O = N-formimidoyl-L-glutamate. It functions in the pathway amino-acid degradation; L-histidine degradation into L-glutamate; N-formimidoyl-L-glutamate from L-histidine: step 3/3. Its function is as follows. Catalyzes the hydrolytic cleavage of the carbon-nitrogen bond in imidazolone-5-propanoate to yield N-formimidoyl-L-glutamate. It is the third step in the universal histidine degradation pathway. The polypeptide is Imidazolonepropionase (Shewanella halifaxensis (strain HAW-EB4)).